Consider the following 507-residue polypeptide: Glycerol kinase (507 aa).

Thr12 serves as a coordination point for ADP. ATP contacts are provided by Thr12, Thr13, and Ser14. Thr12 contributes to the sn-glycerol 3-phosphate binding site. ADP is bound at residue Arg16. Positions 82, 83, 134, and 250 each coordinate sn-glycerol 3-phosphate. Glycerol-binding residues include Arg82, Glu83, Tyr134, Asp250, and Gln251. Residues Thr272 and Gly316 each coordinate ADP. ATP-binding residues include Thr272, Gly316, Gln320, and Gly417. The ADP site is built by Gly417 and Asn421.

The protein belongs to the FGGY kinase family.

It carries out the reaction glycerol + ATP = sn-glycerol 3-phosphate + ADP + H(+). The protein operates within polyol metabolism; glycerol degradation via glycerol kinase pathway; sn-glycerol 3-phosphate from glycerol: step 1/1. With respect to regulation, inhibited by fructose 1,6-bisphosphate (FBP). Its function is as follows. Key enzyme in the regulation of glycerol uptake and metabolism. Catalyzes the phosphorylation of glycerol to yield sn-glycerol 3-phosphate. In Beijerinckia indica subsp. indica (strain ATCC 9039 / DSM 1715 / NCIMB 8712), this protein is Glycerol kinase.